A 287-amino-acid chain; its full sequence is Casein kinase II subunit beta-1 (287 aa).

Residues 1-97 (MYRDRGTVNS…ESDVSGSDGE (97 aa)) are disordered. Residues 13–25 (EVVDRKRINDALE) are compositionally biased toward basic and acidic residues. Residues 41-50 (GTVTAATTTA) are compositionally biased toward low complexity. Residues 78-97 (SDDESDTDSEESDVSGSDGE) show a composition bias toward acidic residues.

Belongs to the casein kinase 2 subunit beta family. As to quaternary structure, heterotetramer of two catalytic alpha subunits and two regulatory beta subunits. Interacts with CCA1. Interacts with LHY. In terms of processing, phosphorylated by alpha subunit.

The protein resides in the cytoplasm. The protein localises to the cytosol. Its subcellular location is the nucleus. In terms of biological role, plays a complex role in regulating the basal catalytic activity of the alpha subunit. The tetrameric holoenzyme CK2, composed of two alpha and two beta subunits, phosphorylates the transcription factor GBFl, resulting in stimulation of its DNA binding activity. CK2 phosphorylates the transcription factor PIF1 after an exposure to light, resulting in a proteasome-dependent degradation of PIF1 and promotion of photomorphogenesis. CK2 phosphorylates translation initiation factors. May participate in the regulation of the initiation of translation. Stimulates the binding of CCA1 to promoters. In Arabidopsis thaliana (Mouse-ear cress), this protein is Casein kinase II subunit beta-1 (CKB1).